The chain runs to 219 residues: MSEIELEPGADPERAERARKLFSGPIAFLKSAPALQHLPVPSVPEIAFAGRSNVGKSSLLNALTNRNGLARTSVTPGRTQELNYFDVGEPPVFRLVDMPGYGFAKAPKDVVRKWRFLINDYLRGRQVLKRTLVLIDSRHGIKDVDRDVLEMLDTAAVSYRLVLTKADKIKASALADVHAATEAEARKHPAAHPEVIATSSEKGMGIAELRTAVLEAVEL.

Residues Ser-42–Leu-219 form the EngB-type G domain. GTP is bound by residues Gly-50–Ser-57, Gly-77–Glu-81, Asp-97–Gly-100, Thr-164–Asp-167, and Thr-198–Ser-200. Residues Ser-57 and Thr-79 each coordinate Mg(2+).

This sequence belongs to the TRAFAC class TrmE-Era-EngA-EngB-Septin-like GTPase superfamily. EngB GTPase family. The cofactor is Mg(2+).

In terms of biological role, necessary for normal cell division and for the maintenance of normal septation. This Sphingopyxis alaskensis (strain DSM 13593 / LMG 18877 / RB2256) (Sphingomonas alaskensis) protein is Probable GTP-binding protein EngB.